Consider the following 363-residue polypeptide: UDP-N-acetylglucosamine--N-acetylmuramyl-(pentapeptide) pyrophosphoryl-undecaprenol N-acetylglucosamine transferase (363 aa).

Residues 12–14, Arg-166, Ser-196, and Gln-291 each bind UDP-N-acetyl-alpha-D-glucosamine; that span reads TAG.

Belongs to the glycosyltransferase 28 family. MurG subfamily.

Its subcellular location is the cell inner membrane. It catalyses the reaction di-trans,octa-cis-undecaprenyl diphospho-N-acetyl-alpha-D-muramoyl-L-alanyl-D-glutamyl-meso-2,6-diaminopimeloyl-D-alanyl-D-alanine + UDP-N-acetyl-alpha-D-glucosamine = di-trans,octa-cis-undecaprenyl diphospho-[N-acetyl-alpha-D-glucosaminyl-(1-&gt;4)]-N-acetyl-alpha-D-muramoyl-L-alanyl-D-glutamyl-meso-2,6-diaminopimeloyl-D-alanyl-D-alanine + UDP + H(+). Its pathway is cell wall biogenesis; peptidoglycan biosynthesis. Functionally, cell wall formation. Catalyzes the transfer of a GlcNAc subunit on undecaprenyl-pyrophosphoryl-MurNAc-pentapeptide (lipid intermediate I) to form undecaprenyl-pyrophosphoryl-MurNAc-(pentapeptide)GlcNAc (lipid intermediate II). This is UDP-N-acetylglucosamine--N-acetylmuramyl-(pentapeptide) pyrophosphoryl-undecaprenol N-acetylglucosamine transferase from Legionella pneumophila (strain Lens).